A 182-amino-acid polypeptide reads, in one-letter code: Large ribosomal subunit protein uL6 (182 aa).

It belongs to the universal ribosomal protein uL6 family. In terms of assembly, part of the 50S ribosomal subunit.

This protein binds to the 23S rRNA, and is important in its secondary structure. It is located near the subunit interface in the base of the L7/L12 stalk, and near the tRNA binding site of the peptidyltransferase center. The protein is Large ribosomal subunit protein uL6 of Pelotomaculum thermopropionicum (strain DSM 13744 / JCM 10971 / SI).